Consider the following 304-residue polypeptide: Porphobilinogen deaminase (304 aa).

At Cys240 the chain carries S-(dipyrrolylmethanemethyl)cysteine.

It belongs to the HMBS family. Monomer. The cofactor is dipyrromethane.

The enzyme catalyses 4 porphobilinogen + H2O = hydroxymethylbilane + 4 NH4(+). It functions in the pathway porphyrin-containing compound metabolism; protoporphyrin-IX biosynthesis; coproporphyrinogen-III from 5-aminolevulinate: step 2/4. Functionally, tetrapolymerization of the monopyrrole PBG into the hydroxymethylbilane pre-uroporphyrinogen in several discrete steps. This is Porphobilinogen deaminase from Xanthomonas euvesicatoria pv. vesicatoria (strain 85-10) (Xanthomonas campestris pv. vesicatoria).